A 116-amino-acid chain; its full sequence is Methionine-R-sulfoxide reductase B1 (116 aa).

One can recognise a MsrB domain in the interval 1 to 106 (MSFCSFFGGE…FSSSLKFVPK (106 aa)). Zn(2+) contacts are provided by Cys-23, Cys-26, Cys-71, and Cys-74. Sec-95 (nucleophile) is an active-site residue. Residue Sec-95 is a non-standard amino acid, selenocysteine.

This sequence belongs to the MsrB Met sulfoxide reductase family. Zn(2+) serves as cofactor. Truncated MSRB1/SEPX1 proteins produced by failed UGA/Sec decoding are ubiquitinated by some Cul2-RING E3 ubiquitin-protein ligase complexes (containing either PRAME, PRAMF6, PRAMF9 or FEM1C as substrate-recognition component).

It is found in the cytoplasm. Its subcellular location is the nucleus. The protein resides in the cytoskeleton. The enzyme catalyses L-methionyl-[protein] + [thioredoxin]-disulfide + H2O = L-methionyl-(R)-S-oxide-[protein] + [thioredoxin]-dithiol. The catalysed reaction is [thioredoxin]-disulfide + L-methionine + H2O = L-methionine (R)-S-oxide + [thioredoxin]-dithiol. Functionally, methionine-sulfoxide reductase that specifically reduces methionine (R)-sulfoxide back to methionine. While in many cases, methionine oxidation is the result of random oxidation following oxidative stress, methionine oxidation is also a post-translational modification that takes place on specific residue. Acts as a regulator of actin assembly by reducing methionine (R)-sulfoxide mediated by MICALs (MICAL1, MICAL2 or MICAL3) on actin, thereby promoting filament repolymerization. Plays a role in innate immunity by reducing oxidized actin, leading to actin repolymerization in macrophages. The chain is Methionine-R-sulfoxide reductase B1 (MSRB1) from Homo sapiens (Human).